A 375-amino-acid chain; its full sequence is 4,4'-diaponeurosporenoate glycosyltransferase (375 aa).

A run of 4 helical transmembrane segments spans residues 3–23 (WLSRILTVIVAMSMACGALIF), 164–184 (FYEGFSAIFNLMTVVGMNVFS), 277–297 (IMAAIVLWLFGSIASILGLCL), and 330–350 (FSNLLMVCHPLLFMFFTKIFI).

Belongs to the glycosyltransferase 2 family. CrtQ subfamily.

Its subcellular location is the cell membrane. The protein operates within carotenoid biosynthesis; staphyloxanthin biosynthesis; staphyloxanthin from farnesyl diphosphate: step 4/5. In terms of biological role, catalyzes the glycosylation of 4,4'-diaponeurosporenoate, i.e. the esterification of glucose at the C1'' position with the carboxyl group of 4,4'-diaponeurosporenic acid, to form glycosyl-4,4'-diaponeurosporenoate. This is a step in the biosynthesis of staphyloxanthin, an orange pigment present in most staphylococci strains. The sequence is that of 4,4'-diaponeurosporenoate glycosyltransferase (crtQ) from Staphylococcus aureus (strain bovine RF122 / ET3-1).